The sequence spans 282 residues: Elongation factor Ts (282 aa).

An involved in Mg(2+) ion dislocation from EF-Tu region spans residues 79–82 (TDFV).

Belongs to the EF-Ts family.

It is found in the cytoplasm. Its function is as follows. Associates with the EF-Tu.GDP complex and induces the exchange of GDP to GTP. It remains bound to the aminoacyl-tRNA.EF-Tu.GTP complex up to the GTP hydrolysis stage on the ribosome. The polypeptide is Elongation factor Ts (Shewanella loihica (strain ATCC BAA-1088 / PV-4)).